Here is a 458-residue protein sequence, read N- to C-terminus: Phosphoglucosamine mutase (458 aa).

Serine 100 (phosphoserine intermediate) is an active-site residue. The Mg(2+) site is built by serine 100, aspartate 254, aspartate 256, and aspartate 258. At serine 100 the chain carries Phosphoserine.

It belongs to the phosphohexose mutase family. The cofactor is Mg(2+). Post-translationally, activated by phosphorylation.

It carries out the reaction alpha-D-glucosamine 1-phosphate = D-glucosamine 6-phosphate. Catalyzes the conversion of glucosamine-6-phosphate to glucosamine-1-phosphate. This Nocardia farcinica (strain IFM 10152) protein is Phosphoglucosamine mutase.